The primary structure comprises 127 residues: Mediator of RNA polymerase II transcription subunit 9 (127 aa).

Residues 95–119 are a coiled coil; that stretch reads QKEQEIEAKKRVHRQLRQRVEEIAG.

Belongs to the Mediator complex subunit 9 family. As to quaternary structure, component of the Mediator complex.

It is found in the nucleus. Functionally, component of the Mediator complex, a coactivator involved in the regulated transcription of nearly all RNA polymerase II-dependent genes. Mediator functions as a bridge to convey information from gene-specific regulatory proteins to the basal RNA polymerase II transcription machinery. Mediator is recruited to promoters by direct interactions with regulatory proteins and serves as a scaffold for the assembly of a functional preinitiation complex with RNA polymerase II and the general transcription factors. The protein is Mediator of RNA polymerase II transcription subunit 9 (CSE2) of Eremothecium gossypii (strain ATCC 10895 / CBS 109.51 / FGSC 9923 / NRRL Y-1056) (Yeast).